The sequence spans 702 residues: Polyribonucleotide nucleotidyltransferase (702 aa).

Residues Asp487 and Asp493 each contribute to the Mg(2+) site. Residues 554 to 613 enclose the KH domain; that stretch reads PKILTMQINPDKIRDVIGPSGKQINKIIEETGVKIDIEQDGTIFISSVNEEMNKKAKKII. Residues 623–691 form the S1 motif domain; that stretch reads GQVYLGKVKR…KQGRVNLSRK (69 aa).

The protein belongs to the polyribonucleotide nucleotidyltransferase family. Mg(2+) serves as cofactor.

Its subcellular location is the cytoplasm. The catalysed reaction is RNA(n+1) + phosphate = RNA(n) + a ribonucleoside 5'-diphosphate. Functionally, involved in mRNA degradation. Catalyzes the phosphorolysis of single-stranded polyribonucleotides processively in the 3'- to 5'-direction. This is Polyribonucleotide nucleotidyltransferase from Anoxybacillus flavithermus (strain DSM 21510 / WK1).